A 70-amino-acid polypeptide reads, in one-letter code: DNA gyrase inhibitor YacG (70 aa).

Positions 1–15 are enriched in basic and acidic residues; the sequence is MPEDKKAAAKVEPLR. The segment at 1–22 is disordered; that stretch reads MPEDKKAAAKVEPLRKTRPCPE. Zn(2+) contacts are provided by Cys20, Cys23, Cys35, and Cys39.

This sequence belongs to the DNA gyrase inhibitor YacG family. Interacts with GyrB. Requires Zn(2+) as cofactor.

Its function is as follows. Inhibits all the catalytic activities of DNA gyrase by preventing its interaction with DNA. Acts by binding directly to the C-terminal domain of GyrB, which probably disrupts DNA binding by the gyrase. This is DNA gyrase inhibitor YacG from Rhizobium johnstonii (strain DSM 114642 / LMG 32736 / 3841) (Rhizobium leguminosarum bv. viciae).